Consider the following 127-residue polypeptide: Small ribosomal subunit protein uS11 (127 aa).

Belongs to the universal ribosomal protein uS11 family. Part of the 30S ribosomal subunit. Interacts with proteins S7 and S18. Binds to IF-3.

Functionally, located on the platform of the 30S subunit, it bridges several disparate RNA helices of the 16S rRNA. Forms part of the Shine-Dalgarno cleft in the 70S ribosome. The polypeptide is Small ribosomal subunit protein uS11 (Anaeromyxobacter sp. (strain Fw109-5)).